A 76-amino-acid polypeptide reads, in one-letter code: Omega-conotoxin MoVIA (76 aa).

The first 22 residues, 1–22 (MKLTCVVIVAVLFLTACQLITA), serve as a signal peptide directing secretion. The propeptide occupies 23-45 (DDSRSTQRHRALRSTTKLSMSTR). 3 disulfides stabilise this stretch: cysteine 46-cysteine 61, cysteine 53-cysteine 64, and cysteine 60-cysteine 71. Hydroxyproline occurs at positions 49 and 55.

It belongs to the conotoxin O1 superfamily. As to expression, expressed by the venom duct.

It is found in the secreted. In terms of biological role, omega-conotoxins act at presynaptic membranes, they bind and block voltage-gated calcium channels (Cav). This toxin potently blocks mammalian N-type calcium channels (Cav2.2/CACNA1B) (IC(50)=330 nM on human channels). It is 9-fold more potent in displacing radiolabeled omega-conotoxin GVIA from fish brain membranes than from human SH-SY5Y cells. Functionally, omega-conotoxins act at presynaptic membranes, they bind and block voltage-gated calcium channels (Cav). This toxin potently blocks mammalian N-type calcium channels (Cav2.2/CACNA1B) (IC(50)=600 nM on human channels). It is 60-fold more potent in displacing radiolabeled omega-conotoxin GVIA from fish brain membranes than from human SH-SY5Y cells. In vivo, when tested on rat neuropathic pain model, this toxin shows an analgesic activity. This chain is Omega-conotoxin MoVIA, found in Conus moncuri (Sea snail).